The following is a 464-amino-acid chain: ESX-1 secretion system protein EccE1 (464 aa).

2 helical membrane-spanning segments follow: residues 11–31 and 34–54; these read FTTG…AICM and DLLW…VLTI.

This sequence belongs to the EccE family. In terms of assembly, part of the ESX-1 / type VII secretion system (T7SS), which is composed of cytosolic and membrane components. The ESX-1 membrane complex is composed of EccB1, EccCa1, EccCb1, EccD1 and EccE1.

It is found in the cell inner membrane. Its function is as follows. Part of the ESX-1 / type VII specialized secretion system (T7SS), which exports several proteins including EsxA and EsxB. Plays a role in DNA conjugation, in at least a donor strain. This Mycolicibacterium smegmatis (strain ATCC 700084 / mc(2)155) (Mycobacterium smegmatis) protein is ESX-1 secretion system protein EccE1.